A 547-amino-acid chain; its full sequence is Elongator complex protein 3 (547 aa).

The Radical SAM core domain maps to 82-372; sequence RTASGIAVVA…YRVQRDIPMP (291 aa). [4Fe-4S] cluster-binding residues include Cys99, Cys109, and Cys112. Ser161 bears the Phosphoserine mark. Residue Lys164 coordinates acetyl-CoA. Residue Lys229 is modified to N6-methyllysine. Tyr251 carries the phosphotyrosine modification. One can recognise an N-acetyltransferase domain in the interval 396–547; that stretch reads IQCRDVRTRE…QGPYMVKMLK (152 aa). Acetyl-CoA contacts are provided by residues 474–477, 497–499, and Tyr530; these read ELHV and FGM.

This sequence belongs to the ELP3 family. As to quaternary structure, component of the elongator complex which consists of ELP1, ELP2, ELP3, ELP4, ELP5 and ELP6. ELP1, ELP2 and ELP3 form the elongator core complex. Interacts with alpha-tubulin. Requires [4Fe-4S] cluster as cofactor. Post-translationally, tyrosine-phosphorylated. Also serine/threonine-phosphorylated.

The protein resides in the cytoplasm. It localises to the nucleus. It catalyses the reaction uridine(34) in tRNA + acetyl-CoA + S-adenosyl-L-methionine + H2O = 5-(carboxymethyl)uridine(34) in tRNA + 5'-deoxyadenosine + L-methionine + CoA + 2 H(+). The protein operates within tRNA modification; 5-methoxycarbonylmethyl-2-thiouridine-tRNA biosynthesis. Functionally, catalytic tRNA acetyltransferase subunit of the elongator complex which is required for multiple tRNA modifications, including mcm5U (5-methoxycarbonylmethyl uridine), mcm5s2U (5-methoxycarbonylmethyl-2-thiouridine), and ncm5U (5-carbamoylmethyl uridine). In the elongator complex, acts as a tRNA uridine(34) acetyltransferase by mediating formation of carboxymethyluridine in the wobble base at position 34 in tRNAs. May also act as a protein lysine acetyltransferase by mediating acetylation of target proteins; such activity is however unclear in vivo and recent evidences suggest that ELP3 primarily acts as a tRNA acetyltransferase. Involved in neurogenesis: regulates the migration and branching of projection neurons in the developing cerebral cortex, through a process depending on alpha-tubulin acetylation. Required for acetylation of GJA1 in the developing cerebral cortex. The protein is Elongator complex protein 3 of Mus musculus (Mouse).